We begin with the raw amino-acid sequence, 267 residues long: Trehalose 2-sulfotransferase (267 aa).

Alpha,alpha-trehalose is bound by residues Q14, 33-39 (EPQEFFQ), P48, and W53. E36 acts as the Proton acceptor in catalysis.

This sequence belongs to the Stf0 sulfotransferase family. Homodimer.

It carries out the reaction alpha,alpha-trehalose + 3'-phosphoadenylyl sulfate = 2-O-sulfo-alpha,alpha-trehalose + adenosine 3',5'-bisphosphate + H(+). Its pathway is glycolipid metabolism. Its function is as follows. Catalyzes the sulfuryl group transfer from 3'-phosphoadenosine-5'-phosphosulfate (PAPS) to trehalose, leading to trehalose-2-sulfate (T2S). The sulfation of trehalose is the first step in the biosynthesis of sulfolipid-1 (SL-1), a major cell wall glycolipid in pathogenic mycobacteria. Cannot use free glucose and unnatural stereoisomers of trehalose (alpha,beta (neo-trehalose) and beta,beta (iso-trehalose)) as substrates. This chain is Trehalose 2-sulfotransferase, found in Mycolicibacterium smegmatis (strain ATCC 700084 / mc(2)155) (Mycobacterium smegmatis).